The sequence spans 850 residues: Protein STB2 (850 aa).

Phosphoserine is present on residues serine 594 and serine 625.

This sequence to yeast STB6. As to quaternary structure, interacts with SIN3.

The sequence is that of Protein STB2 (STB2) from Saccharomyces cerevisiae (strain ATCC 204508 / S288c) (Baker's yeast).